Consider the following 443-residue polypeptide: Exodeoxyribonuclease 7 large subunit (443 aa).

The protein belongs to the XseA family. Heterooligomer composed of large and small subunits.

The protein localises to the cytoplasm. It carries out the reaction Exonucleolytic cleavage in either 5'- to 3'- or 3'- to 5'-direction to yield nucleoside 5'-phosphates.. In terms of biological role, bidirectionally degrades single-stranded DNA into large acid-insoluble oligonucleotides, which are then degraded further into small acid-soluble oligonucleotides. The polypeptide is Exodeoxyribonuclease 7 large subunit (Vibrio campbellii (strain ATCC BAA-1116)).